The sequence spans 133 residues: MKKHPSSPAACPCGKPRAYPDCCGRWHAGALFLQAPDAESLMRSRYSAFVLDQLDYLLQTWHPDTRPSELEPNAADVKWLGLQIKASQQQDDTHATVEFVARLRQAGRATRLHELSRFVKEEQRWYYVDGDIR.

This sequence belongs to the UPF0225 family.

The protein is UPF0225 protein BB3385 of Bordetella bronchiseptica (strain ATCC BAA-588 / NCTC 13252 / RB50) (Alcaligenes bronchisepticus).